We begin with the raw amino-acid sequence, 220 residues long: Protein LURP-one-related 12 (220 aa).

It belongs to the LOR family.

Its function is as follows. Might be related to the phospholipid scramblase and tubby-like superfamily of membrane tethered transcription factors. This is Protein LURP-one-related 12 from Arabidopsis thaliana (Mouse-ear cress).